Here is a 181-residue protein sequence, read N- to C-terminus: MADIETKSSQNQPLKTQNIFIGAQIFLRIVVIAASFASTWLMLTNKQTIDIGGFVLDANYSYSPEFKFLSYANIVVGAFSFVSLLFLVLVGRRSSNPTYYFILFLHDLALMSLVLGGCAAATVIGSLGKYGNSHTGWMQICDHFGKFCKRATTSVAFSYFSLVCLLILTITSASKSRQIQV.

Residues 1 to 18 are Cytoplasmic-facing; it reads MADIETKSSQNQPLKTQN. Residues 19–39 form a helical membrane-spanning segment; sequence IFIGAQIFLRIVVIAASFAST. The Extracellular segment spans residues 40–70; sequence WLMLTNKQTIDIGGFVLDANYSYSPEFKFLS. Residue Asn-59 is glycosylated (N-linked (GlcNAc...) asparagine). A helical membrane pass occupies residues 71-91; sequence YANIVVGAFSFVSLLFLVLVG. Residues 92-100 lie on the Cytoplasmic side of the membrane; the sequence is RRSSNPTYY. The chain crosses the membrane as a helical span at residues 101–121; sequence FILFLHDLALMSLVLGGCAAA. The Extracellular portion of the chain corresponds to 122–150; sequence TVIGSLGKYGNSHTGWMQICDHFGKFCKR. A helical membrane pass occupies residues 151–171; sequence ATTSVAFSYFSLVCLLILTIT. The Cytoplasmic segment spans residues 172-181; that stretch reads SASKSRQIQV.

Belongs to the Casparian strip membrane proteins (CASP) family. In terms of assembly, homodimer and heterodimers.

Its subcellular location is the cell membrane. This chain is CASP-like protein 1F2, found in Populus trichocarpa (Western balsam poplar).